We begin with the raw amino-acid sequence, 1573 residues long: Pentafunctional AROM polypeptide (1573 aa).

Residues 1-384 (MSNESNIITV…YEKHATVVSD (384 aa)) are 3-dehydroquinate synthase. Residues 46–48 (DSN), 83–86 (ESSK), 114–116 (GGV), and Asp-119 contribute to the NAD(+) site. Arg-130 is a binding site for 7-phospho-2-dehydro-3-deoxy-D-arabino-heptonate. Residue 139–140 (TT) participates in NAD(+) binding. Asp-146 and Lys-152 together coordinate 7-phospho-2-dehydro-3-deoxy-D-arabino-heptonate. An NAD(+)-binding site is contributed by Lys-161. Asn-162 provides a ligand contact to 7-phospho-2-dehydro-3-deoxy-D-arabino-heptonate. Residues 179 to 182 (FLHT) and Asn-190 each bind NAD(+). Glu-194 provides a ligand contact to Zn(2+). 7-phospho-2-dehydro-3-deoxy-D-arabino-heptonate-binding positions include 194–197 (EIIK) and Lys-250. The active-site Proton acceptor; for 3-dehydroquinate synthase activity is Glu-260. Residues 264 to 268 (RNLLN) and His-271 each bind 7-phospho-2-dehydro-3-deoxy-D-arabino-heptonate. Zn(2+) is bound at residue His-271. The Proton acceptor; for 3-dehydroquinate synthase activity role is filled by His-275. The 7-phospho-2-dehydro-3-deoxy-D-arabino-heptonate site is built by His-287 and Lys-356. His-287 is a Zn(2+) binding site. The EPSP synthase stretch occupies residues 397 to 843 (VDEFTKSSWD…WDVLHQSFGV (447 aa)). Cys-825 functions as the For EPSP synthase activity in the catalytic mechanism. Positions 863 to 1058 (NASIILIGMR…KTKKRSTFLT (196 aa)) are shikimate kinase. ATP is bound at residue 870 to 877 (GMRGAGKT). Positions 1059–1280 (LNYPRIEDAL…AAPGQLTVKQ (222 aa)) are 3-dehydroquinase. Residue His-1182 is the Proton acceptor; for 3-dehydroquinate dehydratase activity of the active site. Lys-1211 acts as the Schiff-base intermediate with substrate; for 3-dehydroquinate dehydratase activity in catalysis. Residues 1293 to 1573 (PEKFFLFGKP…FDAVYQKVIE (281 aa)) are shikimate dehydrogenase.

The protein in the N-terminal section; belongs to the sugar phosphate cyclases superfamily. Dehydroquinate synthase family. In the 2nd section; belongs to the EPSP synthase family. It in the 3rd section; belongs to the shikimate kinase family. This sequence in the 4th section; belongs to the type-I 3-dehydroquinase family. The protein in the C-terminal section; belongs to the shikimate dehydrogenase family. In terms of assembly, homodimer. It depends on Zn(2+) as a cofactor.

The protein localises to the cytoplasm. The catalysed reaction is 7-phospho-2-dehydro-3-deoxy-D-arabino-heptonate = 3-dehydroquinate + phosphate. It carries out the reaction 3-dehydroquinate = 3-dehydroshikimate + H2O. The enzyme catalyses shikimate + NADP(+) = 3-dehydroshikimate + NADPH + H(+). It catalyses the reaction shikimate + ATP = 3-phosphoshikimate + ADP + H(+). The catalysed reaction is 3-phosphoshikimate + phosphoenolpyruvate = 5-O-(1-carboxyvinyl)-3-phosphoshikimate + phosphate. Its pathway is metabolic intermediate biosynthesis; chorismate biosynthesis; chorismate from D-erythrose 4-phosphate and phosphoenolpyruvate: step 2/7. It functions in the pathway metabolic intermediate biosynthesis; chorismate biosynthesis; chorismate from D-erythrose 4-phosphate and phosphoenolpyruvate: step 3/7. It participates in metabolic intermediate biosynthesis; chorismate biosynthesis; chorismate from D-erythrose 4-phosphate and phosphoenolpyruvate: step 4/7. The protein operates within metabolic intermediate biosynthesis; chorismate biosynthesis; chorismate from D-erythrose 4-phosphate and phosphoenolpyruvate: step 5/7. Its pathway is metabolic intermediate biosynthesis; chorismate biosynthesis; chorismate from D-erythrose 4-phosphate and phosphoenolpyruvate: step 6/7. Its function is as follows. The AROM polypeptide catalyzes 5 consecutive enzymatic reactions in prechorismate polyaromatic amino acid biosynthesis. The polypeptide is Pentafunctional AROM polypeptide (Schizosaccharomyces pombe (strain 972 / ATCC 24843) (Fission yeast)).